Here is a 346-residue protein sequence, read N- to C-terminus: Phenylalanine--tRNA ligase alpha subunit (346 aa).

Position 261 (E261) interacts with Mg(2+).

The protein belongs to the class-II aminoacyl-tRNA synthetase family. Phe-tRNA synthetase alpha subunit type 1 subfamily. In terms of assembly, tetramer of two alpha and two beta subunits. The cofactor is Mg(2+).

Its subcellular location is the cytoplasm. It catalyses the reaction tRNA(Phe) + L-phenylalanine + ATP = L-phenylalanyl-tRNA(Phe) + AMP + diphosphate + H(+). In Streptococcus agalactiae serotype III (strain NEM316), this protein is Phenylalanine--tRNA ligase alpha subunit.